The following is a 49-amino-acid chain: Large ribosomal subunit protein bL33B (49 aa).

It belongs to the bacterial ribosomal protein bL33 family.

The sequence is that of Large ribosomal subunit protein bL33B from Bacillus velezensis (strain DSM 23117 / BGSC 10A6 / LMG 26770 / FZB42) (Bacillus amyloliquefaciens subsp. plantarum).